The chain runs to 180 residues: UPF0227 protein YcfP (180 aa).

Belongs to the UPF0227 family.

In Salmonella arizonae (strain ATCC BAA-731 / CDC346-86 / RSK2980), this protein is UPF0227 protein YcfP.